Consider the following 124-residue polypeptide: uncharacterized protein (124 aa).

Positions 1-28 (MGTSLRSQSFREPRPSYGRLHESQGRSL) are disordered. Over residues 9-28 (SFREPRPSYGRLHESQGRSL) the composition is skewed to basic and acidic residues.

This is an uncharacterized protein from Mus musculus (Mouse).